We begin with the raw amino-acid sequence, 221 residues long: GTP cyclohydrolase III (221 aa).

This sequence belongs to the archaeal-type GTP cyclohydrolase family.

The enzyme catalyses GTP + 3 H2O = 2-amino-5-formylamino-6-(5-phospho-D-ribosylamino)pyrimidin-4(3H)-one + 2 phosphate + 2 H(+). Its function is as follows. Catalyzes the formation of 2-amino-5-formylamino-6-ribofuranosylamino-4(3H)-pyrimidinone ribonucleotide monophosphate and inorganic phosphate from GTP. Also has an independent pyrophosphate phosphohydrolase activity. The chain is GTP cyclohydrolase III from Pyrobaculum arsenaticum (strain DSM 13514 / JCM 11321 / PZ6).